The chain runs to 24 residues: M-poneritoxin-Ng2b (24 aa).

Leu24 is modified (leucine amide).

In terms of tissue distribution, expressed by the venom gland.

Its subcellular location is the secreted. Its function is as follows. Has a broad spectrum of activity against both Gram-positive and Gram-negative bacteria. Is inactive against yeast, erythrocytes, and insects. This chain is M-poneritoxin-Ng2b, found in Neoponera goeldii (Ponerine ant).